A 645-amino-acid chain; its full sequence is Threonine--tRNA ligase (645 aa).

A TGS domain is found at 1-63 (MEQINIQFPD…ETDGSIGIVT (63 aa)). Positions 242-540 (DHRKIGKELE…LTEETKGAFP (299 aa)) are catalytic. Zn(2+)-binding residues include Cys336, His387, and His517.

This sequence belongs to the class-II aminoacyl-tRNA synthetase family. Homodimer. The cofactor is Zn(2+).

Its subcellular location is the cytoplasm. The enzyme catalyses tRNA(Thr) + L-threonine + ATP = L-threonyl-tRNA(Thr) + AMP + diphosphate + H(+). In terms of biological role, catalyzes the attachment of threonine to tRNA(Thr) in a two-step reaction: L-threonine is first activated by ATP to form Thr-AMP and then transferred to the acceptor end of tRNA(Thr). Also edits incorrectly charged L-seryl-tRNA(Thr). In Staphylococcus aureus (strain Mu3 / ATCC 700698), this protein is Threonine--tRNA ligase.